The chain runs to 722 residues: Phenylalanine ammonia-lyase lenB (722 aa).

Tyr83 functions as the Proton donor/acceptor in the catalytic mechanism. A disordered region spans residues 117–136 (LPTDRSSSRPSSRYPHGLRS). Positions 190 to 192 (ASG) form a cross-link, 5-imidazolinone (Ala-Gly). Ser191 is subject to 2,3-didehydroalanine (Ser). (E)-cinnamate-binding residues include Asn247, Gln334, Arg340, Asn370, Lys441, Glu469, and Asn472.

Belongs to the PAL/histidase family. Contains an active site 4-methylidene-imidazol-5-one (MIO), which is formed autocatalytically by cyclization and dehydration of residues Ala-Ser-Gly.

It carries out the reaction L-phenylalanine = (E)-cinnamate + NH4(+). It functions in the pathway alkaloid biosynthesis. Phenylalanine ammonia-lyase; part of the gene cluster that mediates the biosynthesis of the ergot alkaloids lentopeptins A and B. Within the pathway, lenB provides the cinnamic acid starter unit for the synthesis of the N-acyldiketopiperazine intermediate by the NRPS lenA. Cinnamic acid is condensed with the Ala-Val-Ala peptide chain by lenA which leads to the N-acyldiketopiperazine intermediate which in turn is converted into lentopeptins A and B by the cytochrome P450 monooxygenase lenC. The sequence is that of Phenylalanine ammonia-lyase lenB from Aspergillus lentulus.